A 185-amino-acid polypeptide reads, in one-letter code: Threonylcarbamoyl-AMP synthase (185 aa).

In terms of domain architecture, YrdC-like spans 4–185; the sequence is SWRVQQAARE…LATGNIVRPA (182 aa).

It belongs to the SUA5 family. TsaC subfamily.

It is found in the cytoplasm. The enzyme catalyses L-threonine + hydrogencarbonate + ATP = L-threonylcarbamoyladenylate + diphosphate + H2O. In terms of biological role, required for the formation of a threonylcarbamoyl group on adenosine at position 37 (t(6)A37) in tRNAs that read codons beginning with adenine. Catalyzes the conversion of L-threonine, HCO(3)(-)/CO(2) and ATP to give threonylcarbamoyl-AMP (TC-AMP) as the acyladenylate intermediate, with the release of diphosphate. The protein is Threonylcarbamoyl-AMP synthase of Pseudomonas fluorescens (strain Pf0-1).